The following is a 623-amino-acid chain: DNA-directed RNA polymerase subunit beta' (623 aa).

Zn(2+)-binding residues include cysteine 70, cysteine 72, cysteine 85, and cysteine 88. 3 residues coordinate Mg(2+): aspartate 466, aspartate 468, and aspartate 470.

This sequence belongs to the RNA polymerase beta' chain family. RpoC1 subfamily. As to quaternary structure, in plastids the minimal PEP RNA polymerase catalytic core is composed of four subunits: alpha, beta, beta', and beta''. When a (nuclear-encoded) sigma factor is associated with the core the holoenzyme is formed, which can initiate transcription. Requires Mg(2+) as cofactor. The cofactor is Zn(2+).

Its subcellular location is the plastid. It localises to the chloroplast. The enzyme catalyses RNA(n) + a ribonucleoside 5'-triphosphate = RNA(n+1) + diphosphate. Functionally, DNA-dependent RNA polymerase catalyzes the transcription of DNA into RNA using the four ribonucleoside triphosphates as substrates. The polypeptide is DNA-directed RNA polymerase subunit beta' (Rhodomonas salina (Cryptomonas salina)).